We begin with the raw amino-acid sequence, 949 residues long: MSFKPIDYLPYDFANRRHIGPSPAEMTQMLEVTGAANLDALMDDTLPAAIRQKEPLAFGKAMSEREVLEHLRRVASKNQVLTSLIGQGYYGTVTPPAIQRNILENPAWYTAYTPYQPEISQGRLEALLNFQTMVSDLTGLEVANASLLDEATACAEAMTMAQRVSKSKSKAFFVDRDCHPQNIAVMQTRAAPLGIEIIVGNPDKMDAEAVFGAIFQYPGTYGHVNDFTDHMAALHAHKAIGIVSADPLALTLLKEPGAMGADIAVGSTQRFGVPEGYGGPHAAYMACRDAYKRAMPGRIVGVSVDSHGHRAYRLSLQTREQHIRREKATSNVCTAQALLAVMASMYAVFHGPEGLRAIAQRIHRKAVRLAKGLEEAGFTVDPQAFFDTITVDVGPLQAAVMKSAVDEGINLRRVGETRVGISLNERCRPDTLEAVWRAFGITRADNDFRPDYRFPEEMLRTSDYLTHPIFHMNRAETEMMRYMRRLSDRDLALDRAMIPLGSCTMKLNSAAEMMPVSWRDFSLLHPFAPVDQAKGYTEMIDDLSAKLCQITGYDQISMQPNSGAQGEYAGLLSIAGYHRANGEAHRNICLIPMSAHGTNPASAQMVGWTVVPIKSADNGDIDMADFAAKAEQHAANLAGCMITYPSTHGVFEETVTEVTRITHQHGGQVYIDGANMNAMVGLSRPGDLGGDVSHLNLHKTFCIPHGGGGPGMGPIGVKSHLAPFLPGHEMTGGGEGAVSAAPFGSPSLLPISWAYCLMMGGDGLTQATRVAILNANYIAKRLEGAFDVLYRGPTGRVAHECVIDVRPFEKSAGVSVEDIAKRLIDCGFHAPTMSWPVAGTLMVEPTESETKAELDRFCDAMLAIRAEIADIEEGRMDAANNPLKNAPHTVDDLVSDWDRPYSRDQGCFPPGAFRVDKYWPPVNRVDNVFGDRHLVCTCPPMEDYAEAAE.

K699 carries the post-translational modification N6-(pyridoxal phosphate)lysine.

This sequence belongs to the GcvP family. As to quaternary structure, the glycine cleavage system is composed of four proteins: P, T, L and H. The cofactor is pyridoxal 5'-phosphate.

It catalyses the reaction N(6)-[(R)-lipoyl]-L-lysyl-[glycine-cleavage complex H protein] + glycine + H(+) = N(6)-[(R)-S(8)-aminomethyldihydrolipoyl]-L-lysyl-[glycine-cleavage complex H protein] + CO2. Functionally, the glycine cleavage system catalyzes the degradation of glycine. The P protein binds the alpha-amino group of glycine through its pyridoxal phosphate cofactor; CO(2) is released and the remaining methylamine moiety is then transferred to the lipoamide cofactor of the H protein. This is Glycine dehydrogenase (decarboxylating) from Roseobacter denitrificans (strain ATCC 33942 / OCh 114) (Erythrobacter sp. (strain OCh 114)).